Consider the following 387-residue polypeptide: uncharacterized protein (387 aa).

3 disordered regions span residues 1-126 (MDGR…GDDE), 138-169 (GNQG…RNEE), and 275-298 (SSIF…AGNK). Residues 32-45 (SSDHRTSNSAESKK) are compositionally biased toward basic and acidic residues. Polar residues-rich tracts occupy residues 49–63 (SGKS…NNDN) and 78–93 (DLSS…SKGT). Over residues 155–169 (ENGKNDIEKNNRNEE) the composition is skewed to basic and acidic residues. Residues 275–296 (SSIFSDSQAVTTDDEGISSTAG) are compositionally biased toward polar residues.

The protein belongs to the ThrE exporter (TC 2.A.79) family.

This is an uncharacterized protein from Saccharomyces cerevisiae (strain ATCC 204508 / S288c) (Baker's yeast).